A 614-amino-acid polypeptide reads, in one-letter code: Interleukin-18 receptor accessory protein (614 aa).

An N-terminal signal peptide occupies residues 1–19 (MLCLGWVFLWFVAGEKTTG). Residues 20-356 (FNHSACATKK…RTIRLRKKEE (337 aa)) are Extracellular-facing. Residue Asn21 is glycosylated (N-linked (GlcNAc...) asparagine). A disulfide bond links Cys46 and Cys126. The segment at 59 to 78 (ASQLSPTQSPAHKPCSGSQK) is disordered. Ig-like C2-type domains follow at residues 148–234 (PQRN…WTVR) and 250–352 (PEIL…IRLR). The N-linked (GlcNAc...) asparagine glycan is linked to Asn151. Cystine bridges form between Cys154–Cys179, Cys174–Cys220, and Cys179–Cys220. Asn227 is a glycosylation site (N-linked (GlcNAc...) asparagine). Residues Cys272 and Cys336 are joined by a disulfide bond. A glycan (N-linked (GlcNAc...) asparagine) is linked at Asn344. The chain crosses the membrane as a helical span at residues 357 to 377 (VVFVYILLGTALMLVGVLVAA). Topologically, residues 378 to 614 (AFLYWYWIEV…LLLYSDQKRC (237 aa)) are cytoplasmic. The 154-residue stretch at 405–558 (KEFDAFVSYS…RFWTQIRYHM (154 aa)) folds into the TIR domain. Residue Glu492 is part of the active site.

It belongs to the interleukin-1 receptor family. In terms of assembly, forms a ternary complex with IL18 and IL18R1. Within this complex, IL18R1 is involved in ligand-binding and IL18RAP in signaling leading to NF-kappa-B and JNK activation.

The protein localises to the cell membrane. The catalysed reaction is NAD(+) + H2O = ADP-D-ribose + nicotinamide + H(+). Within the IL18 receptor complex, does not mediate IL18-binding, but involved in IL18-dependent signal transduction, leading to NF-kappa-B and JNK activation. May play a role in IL18-mediated IFNG synthesis from T-helper 1 (Th1) cells. This Mus musculus (Mouse) protein is Interleukin-18 receptor accessory protein.